The chain runs to 322 residues: Lymphatic vessel endothelial hyaluronic acid receptor 1 (322 aa).

The first 19 residues, 1–19 (MARCFSLVLLLTSIWTTRL), serve as a signal peptide directing secretion. Residues 20–238 (LVQGSLRAEE…EAAGFGGVPT (219 aa)) are Extracellular-facing. The Link domain occupies 40-130 (GITLVSKKAN…SRQFAAYCYN (91 aa)). N-linked (GlcNAc...) asparagine glycosylation occurs at N53. Intrachain disulfides connect C61–C128 and C85–C106. An N-linked (GlcNAc...) asparagine glycan is attached at N130. The chain crosses the membrane as a helical span at residues 239–259 (ALLVLALLFFGAAAGLGFCYV). Residues 260–322 (KRYVKAFPFT…TTVRCLEAEV (63 aa)) are Cytoplasmic-facing. Positions 279–309 (ETKVVKEEKANDSNPNEESKKTDKNPEESKS) are enriched in basic and acidic residues. Residues 279-322 (ETKVVKEEKANDSNPNEESKKTDKNPEESKSPSKTTVRCLEAEV) are disordered.

As to quaternary structure, homodimer; disulfide-linked. Interacts with PDGFB and IGFBP3. Forms a transient ternary complex with PDGFB and PDGFRB in TGN. In terms of processing, O-glycosylated. In terms of tissue distribution, mainly expressed in endothelial cells lining lymphatic vessels.

The protein localises to the cell membrane. Functionally, ligand-specific transporter trafficking between intracellular organelles (TGN) and the plasma membrane. Plays a role in autocrine regulation of cell growth mediated by growth regulators containing cell surface retention sequence binding (CRS). May act as a hyaluronan (HA) transporter, either mediating its uptake for catabolism within lymphatic endothelial cells themselves, or its transport into the lumen of afferent lymphatic vessels for subsequent re-uptake and degradation in lymph nodes. Binds to pericelluar hyaluronan matrices deposited on the surface of leukocytes and facilitates cell adhesion and migration through lymphatic endothelium. This Homo sapiens (Human) protein is Lymphatic vessel endothelial hyaluronic acid receptor 1 (LYVE1).